Here is a 628-residue protein sequence, read N- to C-terminus: MTEKFDYKELGLKVGLEIHRQLDTKKLFSPVPSELTEKVDFTFERRLRPTMSELGEIDPAALEEFKKGRKYIYEGNYELSDLVYMDEEPPRGPDREALEVTLQIAYLLNAKPVDEVHFMRKIVIDGSNVSGFQRTAIIALDGKVDTPWGSVGIPTICLEEDACRIVERKEKEVIYRLDRLGIPLVEISTTPDIHHPEQAKVVAKYIGDALRATRKVKRGLGTIRQDLNVSIKGGARVEIKGVQELDMIPLIIEREVERQLNLLKIRDELRERGVRPEDIKEEFYDVTDVFENTESKIIARTIKKGGNVLAVKLPKFRGLIGREIQPGRRLGTEMADRAKKYVKGIFHIDELPNYGITEKEVNAVIEKLGLGELDAFVLVAADEETAKKALREVIKRAREAIEGVPEETRRALPDGNTQYMRPLPGKARMYPETDIPSIFIPPEEKERIKANLPELPQERVERYVKEYRIDKSLAETLVNDERDELFEELVKKGVKPSLAASILVVVLKGLKKEVPIENITDDHIREAFQLYTEGKIAKEAFEEIFKELALHPEKSAAQVAEEKGLTLLSEEEVERIIDEVVQQNIEVIKAKGMGAMGMIMGRAMAKLRGRADGKLVSTLVRRKIQELS.

Belongs to the GatB/GatE family. GatE subfamily. In terms of assembly, heterodimer of GatD and GatE.

The catalysed reaction is L-glutamyl-tRNA(Gln) + L-glutamine + ATP + H2O = L-glutaminyl-tRNA(Gln) + L-glutamate + ADP + phosphate + H(+). Allows the formation of correctly charged Gln-tRNA(Gln) through the transamidation of misacylated Glu-tRNA(Gln) in organisms which lack glutaminyl-tRNA synthetase. The reaction takes place in the presence of glutamine and ATP through an activated gamma-phospho-Glu-tRNA(Gln). The GatDE system is specific for glutamate and does not act on aspartate. The polypeptide is Glutamyl-tRNA(Gln) amidotransferase subunit E (Thermococcus gammatolerans (strain DSM 15229 / JCM 11827 / EJ3)).